Here is a 600-residue protein sequence, read N- to C-terminus: DDB1- and CUL4-associated factor 15 (600 aa).

The segment at Met-1–Gly-30 is disordered. A compositionally biased stretch (gly residues) spans Ala-13–Arg-27. Ser-50 carries the phosphoserine modification. Zn(2+)-binding residues include Cys-193, Cys-196, Cys-211, and His-214. E7820-binding positions include Phe-231 and Ala-234–Phe-235. Over residues Pro-280–Leu-295 the composition is skewed to pro residues. The tract at residues Pro-280–Ala-316 is disordered. Phosphoserine occurs at positions 310 and 314.

In terms of assembly, component of the DCX(DCAF15) complex, also named CLR4(DCAF15) complex, composed of DCAF15, DDB1, cullin-4 (CUL4A or CUL4B), DDA1 and RBX1.

The protein operates within protein modification; protein ubiquitination. Aryl sulfonamide anticancer drugs change the substrate specificity of DCAF15 by acting as a molecular glue that promotes binding between DCAF15 and weak affinity interactors, such as RBM39. Its function is as follows. Substrate-recognition component of the DCX(DCAF15) complex, a cullin-4-RING E3 ubiquitin-protein ligase complex that mediates ubiquitination and degradation of target proteins. The DCX(DCAF15) complex acts as a regulator of the natural killer (NK) cells effector functions, possibly by mediating ubiquitination and degradation of cohesin subunits SMC1A and SMC3. May play a role in the activation of antigen-presenting cells (APC) and their interaction with NK cells. In terms of biological role, binding of aryl sulfonamide anticancer drugs, such as indisulam (E7070) or E7820, change the substrate specificity of the DCX(DCAF15) complex, leading to promote ubiquitination and degradation of splicing factor RBM39. RBM39 degradation results in splicing defects and death in cancer cell lines. Aryl sulfonamide anticancer drugs change the substrate specificity of DCAF15 by acting as a molecular glue that promotes binding between DCAF15 and weak affinity interactor RBM39. Aryl sulfonamide anticancer drugs also promote ubiquitination and degradation of RBM23 and PRPF39. This is DDB1- and CUL4-associated factor 15 from Homo sapiens (Human).